The sequence spans 262 residues: Acyl-[acyl-carrier-protein]--UDP-N-acetylglucosamine O-acyltransferase (262 aa).

The protein belongs to the transferase hexapeptide repeat family. LpxA subfamily. Homotrimer.

It localises to the cytoplasm. The catalysed reaction is a (3R)-hydroxyacyl-[ACP] + UDP-N-acetyl-alpha-D-glucosamine = a UDP-3-O-[(3R)-3-hydroxyacyl]-N-acetyl-alpha-D-glucosamine + holo-[ACP]. It functions in the pathway glycolipid biosynthesis; lipid IV(A) biosynthesis; lipid IV(A) from (3R)-3-hydroxytetradecanoyl-[acyl-carrier-protein] and UDP-N-acetyl-alpha-D-glucosamine: step 1/6. Functionally, involved in the biosynthesis of lipid A, a phosphorylated glycolipid that anchors the lipopolysaccharide to the outer membrane of the cell. The polypeptide is Acyl-[acyl-carrier-protein]--UDP-N-acetylglucosamine O-acyltransferase (Shigella flexneri serotype 5b (strain 8401)).